Consider the following 825-residue polypeptide: Glycerol-3-phosphate acyltransferase 1, mitochondrial (825 aa).

The Cytoplasmic segment spans residues 1–87; that stretch reads MDESALTLGT…FFNPSIPSLG (87 aa). The segment at 80–120 is important for mitochondrial localization; that stretch reads NPSIPSLGLRNVIYINETHTRHRGWLARRLSYVLFIQERDV. The stretch at 88-118 is an intramembrane region; the sequence is LRNVIYINETHTRHRGWLARRLSYVLFIQER. Over 119–825 the chain is Cytoplasmic; it reads DVHKGMFATN…LEYILSLVVL (707 aa). The HXXXXD motif signature appears at 230–235; sequence HRSHID. 5 residues coordinate CoA: R278, R279, K288, R293, and R328. S380 carries the phosphoserine modification. A disordered region spans residues 435 to 455; the sequence is SRPSGAADEGTDMSINESRNA. R461 is a CoA binding site. S685 and S692 each carry phosphoserine. K777 and K781 each carry N6-acetyllysine.

It belongs to the GPAT/DAPAT family. In terms of tissue distribution, highly expressed in adipose tissues and lung. Low expression in liver.

It localises to the mitochondrion outer membrane. The enzyme catalyses sn-glycerol 3-phosphate + an acyl-CoA = a 1-acyl-sn-glycero-3-phosphate + CoA. It catalyses the reaction (9Z,12Z)-octadecadienoyl-CoA + sn-glycerol 3-phosphate = 1-(9Z,12Z)-octadecadienoyl-sn-glycero-3-phosphate + CoA. It carries out the reaction sn-glycerol 3-phosphate + (9Z)-octadecenoyl-CoA = 1-(9Z-octadecenoyl)-sn-glycero-3-phosphate + CoA. The catalysed reaction is sn-glycerol 3-phosphate + octadecanoyl-CoA = 1-octadecanoyl-sn-glycero-3-phosphate + CoA. The enzyme catalyses sn-glycerol 3-phosphate + hexadecanoyl-CoA = 1-hexadecanoyl-sn-glycero-3-phosphate + CoA. It catalyses the reaction dodecanoyl-CoA + sn-glycerol 3-phosphate = 1-dodecanoyl-sn-glycerol 3-phosphate + CoA. It carries out the reaction 1-acyl-sn-glycero-3-phospho-(1'-sn-glycerol) + an acyl-CoA = a 1,2-diacyl-sn-glycero-3-phospho-(1'-sn-glycerol) + CoA. It participates in phospholipid metabolism; CDP-diacylglycerol biosynthesis; CDP-diacylglycerol from sn-glycerol 3-phosphate: step 1/3. Its function is as follows. Mitochondrial membrane protein that catalyzes the essential first step of biosynthesis of glycerolipids such as triglycerides, phosphatidic acids and lysophosphatidic acids. Esterifies acyl-group from acyl-coenzyme A (acyl-CoA) to the sn-1 position of glycerol-3-phosphate, to produce lysophosphatidic acid. Has a narrow hydrophobic binding cleft that selects for a linear acyl chain. Catalytic activity is higher for substrates with a 16-carbon acyl chain. The sequence is that of Glycerol-3-phosphate acyltransferase 1, mitochondrial from Bos taurus (Bovine).